Reading from the N-terminus, the 198-residue chain is Ras-related protein RabH (198 aa).

14–21 (GDWNVGKS) serves as a coordination point for GTP. The Effector region motif lies at 36 to 44 (TKLSMGEHF). GTP contacts are provided by residues 62–66 (DTSGM) and 120–123 (SKFD). C195 bears the Cysteine methyl ester mark. A lipid anchor (S-geranylgeranyl cysteine) is attached at C195. The propeptide at 196–198 (SIN) is removed in mature form.

This sequence belongs to the small GTPase superfamily. Rab family.

Its subcellular location is the cell membrane. The polypeptide is Ras-related protein RabH (rabH) (Dictyostelium discoideum (Social amoeba)).